Consider the following 302-residue polypeptide: Probable WRKY transcription factor 40 (302 aa).

Positions Asp-140–Pro-206 form a DNA-binding region, WRKY.

Belongs to the WRKY group III family.

The protein resides in the nucleus. In terms of biological role, transcription factor. Interacts specifically with the W box (5'-(T)TGAC[CT]-3'), a frequently occurring elicitor-responsive cis-acting element. This Arabidopsis thaliana (Mouse-ear cress) protein is Probable WRKY transcription factor 40.